The primary structure comprises 151 residues: Large ribosomal subunit protein eL8 (151 aa).

Belongs to the eukaryotic ribosomal protein eL8 family. In terms of assembly, part of the 50S ribosomal subunit. Probably part of the RNase P complex.

It localises to the cytoplasm. Multifunctional RNA-binding protein that recognizes the K-turn motif in ribosomal RNA, the RNA component of RNase P, box H/ACA, box C/D and box C'/D' sRNAs. This chain is Large ribosomal subunit protein eL8, found in Pyrobaculum aerophilum (strain ATCC 51768 / DSM 7523 / JCM 9630 / CIP 104966 / NBRC 100827 / IM2).